The primary structure comprises 62 residues: Lepidopteran-selective toxin (62 aa).

An N-terminal signal peptide occupies residues 1–24; that stretch reads MKFLYGVILIALFLTVMTATLSEA. Disulfide bonds link Cys-26–Cys-43, Cys-29–Cys-51, Cys-40–Cys-56, and Cys-44–Cys-58. Residue Tyr-62 is a propeptide.

The protein belongs to the short scorpion toxin superfamily. Chloride channel inhibitor family. Expressed by the venom gland.

It is found in the secreted. In terms of biological role, toxin with unknown function in healthy organisms. On glioma cells, interacts with chloride channels (probably ClC-3/CLCN3) and MMP2 at the surface of glioma cells. This complex is then internalized via caveolae, thus inhibiting the chloride channels necessary for cell shrinkage and tumor propagation. Induces flaccid paralysis in H.virescens larvae. Is not toxic to S.falculata larvae or mice. In Hottentotta tamulus (Eastern Indian scorpion), this protein is Lepidopteran-selective toxin.